The sequence spans 529 residues: Phospholipase A1-Igamma2, chloroplastic (529 aa).

The N-terminal 43 residues, 1–43 (MAAIPSHNNLLTINHKNSITGSSSLNTNFSEINFPAKFRVATR), are a transit peptide targeting the chloroplast. Positions 316–320 (GHSLG) match the GXSXG motif. Catalysis depends on Ser-318, which acts as the Acyl-ester intermediate. Residues Asp-381 and His-437 each act as charge relay system in the active site.

It belongs to the AB hydrolase superfamily. Lipase family. Interacts with SBP1. In terms of tissue distribution, widely expressed. Highly expressed in leaves and stems.

It is found in the plastid. The protein resides in the chloroplast. It catalyses the reaction 1,2-dihexadecanoyl-sn-glycero-3-phosphocholine + H2O = 2-hexadecanoyl-sn-glycero-3-phosphocholine + hexadecanoate + H(+). It carries out the reaction a 1,2-diacyl-3-O-(beta-D-galactosyl)-sn-glycerol + H2O = an acyl-3-O-(beta-D-galactosyl)-sn-glycerol + a fatty acid + H(+). The catalysed reaction is a 1,2-diacyl-3-O-[alpha-D-galactosyl-(1-&gt;6)-beta-D-galactosyl]-sn-glycerol + H2O = acyl-3-O-[alpha-D-galactosyl-(1-&gt;6)-beta-D-galactosyl]-sn-glycerol + a fatty acid + H(+). The enzyme catalyses a triacylglycerol + H2O = a diacylglycerol + a fatty acid + H(+). Acylhydrolase with broad specificity. Catalyzes the hydrolysis of phosphatidylcholine at the sn-1 position. Possesses moderate activity toward phosphatidylcholine (PC), monogalactosyldiacylglycerol (MGDG), digalactosyldiacylglycerol (DGDG) and triacylglycerol (TAG). The protein is Phospholipase A1-Igamma2, chloroplastic of Arabidopsis thaliana (Mouse-ear cress).